Consider the following 92-residue polypeptide: SPbeta prophage-derived uncharacterized protein YoqM (92 aa).

Residues 1 to 25 form the signal peptide; sequence MKLRKVLTGSVLSLGLLVSASPAFA.

The chain is SPbeta prophage-derived uncharacterized protein YoqM (yoqM) from Bacillus subtilis (strain 168).